Reading from the N-terminus, the 193-residue chain is C-type lectin domain family 3 member A homolog (193 aa).

An N-terminal signal peptide occupies residues 1-24 (MAQAGLLIWLFFTILLLDLTCTQS). Intrachain disulfides connect Cys66/Cys76, Cys93/Cys188, and Cys164/Cys180. Residues 72-189 (IHKKCYLSFE…CRSLKKYICE (118 aa)) enclose the C-type lectin domain.

The protein resides in the secreted. The chain is C-type lectin domain family 3 member A homolog (clec3a) from Xenopus laevis (African clawed frog).